The following is a 519-amino-acid chain: Putative glucosylceramidase 4 (519 aa).

Residues 1 to 24 (MILNISVSLLIFLAFYGFSSDAKS) form the signal peptide. Glutamate 256 (proton donor) is an active-site residue. The active-site Nucleophile is glutamate 361.

This sequence belongs to the glycosyl hydrolase 30 family.

The enzyme catalyses a beta-D-glucosylceramide + H2O = an N-acyl-sphingoid base + D-glucose. It catalyses the reaction a beta-D-glucosyl-(1&lt;-&gt;1')-N-acylsphing-4-enine + H2O = an N-acylsphing-4-enine + D-glucose. The catalysed reaction is an N-acyl-1-beta-D-glucosyl-15-methylhexadecasphing-4-enine + H2O = an N-acyl-15-methylhexadecasphing-4-enine + D-glucose. Its pathway is lipid metabolism; sphingolipid metabolism. Glucosylceramidase that catalyzes the hydrolysis of glucosylceramides into free ceramides and glucose. C.elegans contains specific sphingoid bases, which are unique or different in structure compared to the sphingoid bases found in other animals. Two examples of these distinctive compounds are: 15-methylhexadecasphinganine and 15-methylhexadecasphing-4-enine. The protein is Putative glucosylceramidase 4 (gba-4) of Caenorhabditis elegans.